We begin with the raw amino-acid sequence, 61 residues long: 2S seed storage albumin protein (61 aa).

This sequence belongs to the 2S seed storage albumins family. The mature protein consists of a small and a large chain linked by 2 disulfide bonds.

This is a 2S seed storage protein. Inhibits cell-free protein synthesis. The sequence is that of 2S seed storage albumin protein from Cucurbita moschata (Winter crookneck squash).